Here is a 305-residue protein sequence, read N- to C-terminus: MNRLLKTVIENNRKWISEGKVASYIPELSKMDKNLLGISVCTLGGEEYWEGDAEVKFTIQSISKIVTLMLAIIDNGEDYVFSKVGMEPTETAFNSIVNLEAKESHKPINPMINAGAIVVASMVAGKDSDEKFDRILKFTRKISGNNNIDINLNVYTSEKETGHRNRALAYFMKSTGALKGDVEEILDVYFKQCSIEITCKDLARIGVMLANDGVSPYTGDRIVPRYVARIVKTIMVTCGMYDASGNFAVHIGIPAKSGVGGGIVACAPRRMGIGVLGTALDEKGNSIAGTKILEELSKQLDLSIF.

Residues serine 61, asparagine 113, glutamate 158, asparagine 165, tyrosine 189, tyrosine 241, and valine 259 each coordinate substrate.

It belongs to the glutaminase family. As to quaternary structure, homotetramer.

The catalysed reaction is L-glutamine + H2O = L-glutamate + NH4(+). The sequence is that of Glutaminase from Clostridium botulinum (strain Loch Maree / Type A3).